Consider the following 92-residue polypeptide: Small ribosomal subunit protein uS19 (92 aa).

It belongs to the universal ribosomal protein uS19 family.

In terms of biological role, protein S19 forms a complex with S13 that binds strongly to the 16S ribosomal RNA. The protein is Small ribosomal subunit protein uS19 of Malacoplasma penetrans (strain HF-2) (Mycoplasma penetrans).